The chain runs to 346 residues: Holliday junction branch migration complex subunit RuvB (346 aa).

Residues 1–183 (MTEQRIIASS…FGIVQRLEFY (183 aa)) are large ATPase domain (RuvB-L). ATP contacts are provided by residues I22, R23, G64, K67, T68, T69, 130-132 (EDF), R173, Y183, and R220. T68 contacts Mg(2+). Residues 184 to 254 (SPQELTRIVS…VAQAAMQMLK (71 aa)) are small ATPAse domain (RuvB-S). Positions 257–346 (PEGFDELDRR…PGIGEPGDLF (90 aa)) are head domain (RuvB-H). Residues R293, R312, and R317 each contribute to the DNA site.

Belongs to the RuvB family. Homohexamer. Forms an RuvA(8)-RuvB(12)-Holliday junction (HJ) complex. HJ DNA is sandwiched between 2 RuvA tetramers; dsDNA enters through RuvA and exits via RuvB. An RuvB hexamer assembles on each DNA strand where it exits the tetramer. Each RuvB hexamer is contacted by two RuvA subunits (via domain III) on 2 adjacent RuvB subunits; this complex drives branch migration. In the full resolvosome a probable DNA-RuvA(4)-RuvB(12)-RuvC(2) complex forms which resolves the HJ.

Its subcellular location is the cytoplasm. It carries out the reaction ATP + H2O = ADP + phosphate + H(+). Functionally, the RuvA-RuvB-RuvC complex processes Holliday junction (HJ) DNA during genetic recombination and DNA repair, while the RuvA-RuvB complex plays an important role in the rescue of blocked DNA replication forks via replication fork reversal (RFR). RuvA specifically binds to HJ cruciform DNA, conferring on it an open structure. The RuvB hexamer acts as an ATP-dependent pump, pulling dsDNA into and through the RuvAB complex. RuvB forms 2 homohexamers on either side of HJ DNA bound by 1 or 2 RuvA tetramers; 4 subunits per hexamer contact DNA at a time. Coordinated motions by a converter formed by DNA-disengaged RuvB subunits stimulates ATP hydrolysis and nucleotide exchange. Immobilization of the converter enables RuvB to convert the ATP-contained energy into a lever motion, pulling 2 nucleotides of DNA out of the RuvA tetramer per ATP hydrolyzed, thus driving DNA branch migration. The RuvB motors rotate together with the DNA substrate, which together with the progressing nucleotide cycle form the mechanistic basis for DNA recombination by continuous HJ branch migration. Branch migration allows RuvC to scan DNA until it finds its consensus sequence, where it cleaves and resolves cruciform DNA. The protein is Holliday junction branch migration complex subunit RuvB of Xanthomonas euvesicatoria pv. vesicatoria (strain 85-10) (Xanthomonas campestris pv. vesicatoria).